Reading from the N-terminus, the 457-residue chain is Mesentericin Y105 secretion protein MesE (457 aa).

Residues 22-42 form a helical membrane-spanning segment; the sequence is TLIIVPIFLLVVFIVLFSLFA.

The protein belongs to the membrane fusion protein (MFP) (TC 8.A.1) family.

Its subcellular location is the membrane. Functionally, involved in the secretion of mesentericin Y105. This Leuconostoc mesenteroides protein is Mesentericin Y105 secretion protein MesE (mesE).